The following is a 65-amino-acid chain: Dybowskin-2CDYa (65 aa).

A signal peptide spans 1-22; that stretch reads MFTLKKSLLLLFFIGVIKLSLC. A propeptide spanning residues 23-47 is cleaved from the precursor; it reads EEERNADDDERRDDPDEMDVEVENR. Acidic residues predominate over residues 26 to 43; the sequence is RNADDDERRDDPDEMDVE. The tract at residues 26–65 is disordered; it reads RNADDDERRDDPDEMDVEVENRSAVGRHGRRFGLRKHRKH. Residues 50-65 show a composition bias toward basic residues; the sequence is VGRHGRRFGLRKHRKH.

It belongs to the frog skin active peptide (FSAP) family. Brevinin subfamily. In terms of tissue distribution, expressed by the skin glands.

Its subcellular location is the secreted. Its function is as follows. Antimicrobial peptide. Has activity against the Gram-positive bacterium S.aureus (MIC=6 uM) and the Gram-negative bacterium E.coli (MIC=3 uM). Lacks hemolytic activity against human erythrocytes. The sequence is that of Dybowskin-2CDYa from Rana dybowskii (Dybovsky's frog).